The sequence spans 193 residues: Sorting nexin-22 (193 aa).

The disordered stretch occupies residues 1-21 (MLEVHIPSVGPEAEGPRQSPE). A PX domain is found at 1 to 118 (MLEVHIPSVG…HFPTDPKASN (118 aa)). Positions 43, 45, 66, and 79 each coordinate a 1,2-diacyl-sn-glycero-3-phospho-(1D-myo-inositol-3-phosphate).

Belongs to the sorting nexin family. In terms of assembly, (Microbial infection) Interacts with P.falciparum (strain 3D7) CK1. Expressed in erythrocytes (at protein level).

The protein resides in the cytoplasmic vesicle membrane. Functionally, may be involved in several stages of intracellular trafficking. Interacts with membranes containing phosphatidylinositol 3-phosphate (PtdIns(3P)). In Homo sapiens (Human), this protein is Sorting nexin-22 (SNX22).